A 144-amino-acid polypeptide reads, in one-letter code: Maximins 4/H3 type 2 (144 aa).

The first 18 residues, 1-18, serve as a signal peptide directing secretion; the sequence is MNFKYIIAVSFFIASAYA. A propeptide spanning residues 19 to 43 is cleaved from the precursor; it reads RRNEKDVQSLSQRDVLEEESLREIR. The residue at position 70 (Asn-70) is an Asparagine amide. A propeptide spanning residues 74-123 is cleaved from the precursor; it reads TAEDHEVMKRLEAVMRDLDSLDHPEEASERETRGFNQEEIANLFTKKEKR. At Ile-143 the chain carries Isoleucine amide.

It belongs to the bombinin family. In terms of tissue distribution, expressed by the skin glands.

It is found in the secreted. Maximin-4 shows antibacterial activity against both Gram-positive and Gram-negative bacteria. It also shows antimicrobial activity against the fungus C.albicans, but not against A.flavus nor P.uticale. It has little hemolytic activity. It does not possess a significant cytotoxicity against tumor cell lines. It does not possess a significant anti-HIV activity. Functionally, maximin-H3 shows antibacterial activity against both Gram-positive and Gram-negative bacteria. It also shows antimicrobial activity against the fungus C.albicans. Shows strong hemolytic activity. The polypeptide is Maximins 4/H3 type 2 (Bombina maxima (Giant fire-bellied toad)).